The primary structure comprises 337 residues: MIKAGIIGASGYTGGELLRLLVNHPNVKLELATSRSLAGKPVTSTHRHLEGFLDLNYENPDSEDIRERCDVVFLAVPHGSAMNYVPELLDGNTKVVDLSADYRLETSEFEKIYGIKHSDPRNAVYGLVELHPEVAKENFVANPGCFPTGSILAAAPLAAAGLIDIAVFDSKTGISGAGISPTQNSHYPNLAENIIPYKLTAHRHRAEIVQELTGLEGKLRNINFTPHVIPSIRGIFTTAHLFTKETLSTDDLKTIYEEFYRDRPFIRFPSGVPSLTAVRGSNFCDISFEADKENNRVVVLSAIDNLVKGASGQAIQNMNLMFGLDETCGLWMPATAP.

Cys-145 is a catalytic residue.

This sequence belongs to the NAGSA dehydrogenase family. Type 1 subfamily.

It localises to the cytoplasm. It carries out the reaction N-acetyl-L-glutamate 5-semialdehyde + phosphate + NADP(+) = N-acetyl-L-glutamyl 5-phosphate + NADPH + H(+). Its pathway is amino-acid biosynthesis; L-arginine biosynthesis; N(2)-acetyl-L-ornithine from L-glutamate: step 3/4. Catalyzes the NADPH-dependent reduction of N-acetyl-5-glutamyl phosphate to yield N-acetyl-L-glutamate 5-semialdehyde. This is N-acetyl-gamma-glutamyl-phosphate reductase from Methanosarcina barkeri (strain Fusaro / DSM 804).